Consider the following 337-residue polypeptide: MLRNNLGNSSDSKNEDGSVFSQTEHNIVATYLIMAGMISIISNIIVLGIFIKYKELRTPTNAIIINLAVTDIGVSSIGYPMSAASDLYGSWKFGYAGCQVYAGLNIFFGMASIGLLTVVAVDRYLTICLPDVGRRMTTNTYIGLILGAWINGLFWALMPIIGWASYAPDPTGATCTINWRKNDRSFVSYTMTVIAINFIVPLTVMFYCYYHVTLSIKHHTTSDCTESLNRDWSDQIDVTKMSVIMICMFLVAWSPYSIVCLWASFGDPKKIPPPMAIIAPLFAKSSTFYNPCIYVVANKKFRRAMLAMFKCQTHQTMPVTSILPMDVSQNPLASGRI.

Topologically, residues M1–N26 are extracellular. The N-linked (GlcNAc...) asparagine glycan is linked to N8. A helical transmembrane segment spans residues I27 to I49. Residues F50–N61 lie on the Cytoplasmic side of the membrane. Residues A62 to L87 traverse the membrane as a helical segment. The Extracellular segment spans residues Y88–Y101. The cysteines at positions 98 and 175 are disulfide-linked. A helical transmembrane segment spans residues A102–V121. Topologically, residues D122–T140 are cytoplasmic. The helical transmembrane segment at Y141–A164 threads the bilayer. The Extracellular portion of the chain corresponds to S165–S188. A helical transmembrane segment spans residues Y189–V212. Residues T213–K240 lie on the Cytoplasmic side of the membrane. A helical membrane pass occupies residues M241 to S264. At F265–P272 the chain is on the extracellular side. A helical transmembrane segment spans residues P273 to A297. K284 is modified (N6-(retinylidene)lysine). The Cytoplasmic segment spans residues N298–I337.

This sequence belongs to the G-protein coupled receptor 1 family. Opsin subfamily. In terms of tissue distribution, found only in the eye, where it is localized to the retinal pigment epithelium (RPE). In the RPE, it is localized to the microvilli that surround the photoreceptor outer segments.

It is found in the membrane. Functionally, may play a role in rpe physiology either by detecting light directly or by monitoring the concentration of retinoids or other photoreceptor-derived compounds. This is Visual pigment-like receptor peropsin (RRH) from Homo sapiens (Human).